The primary structure comprises 157 residues: 6,7-dimethyl-8-ribityllumazine synthase (157 aa).

5-amino-6-(D-ribitylamino)uracil is bound by residues Phe-26, 60–62, and 86–88; these read ALE and AVI. 91 to 92 is a binding site for (2S)-2-hydroxy-3-oxobutyl phosphate; the sequence is ET. His-94 functions as the Proton donor in the catalytic mechanism. Position 119 (Asn-119) interacts with 5-amino-6-(D-ribitylamino)uracil. (2S)-2-hydroxy-3-oxobutyl phosphate is bound at residue Arg-133.

Belongs to the DMRL synthase family.

It catalyses the reaction (2S)-2-hydroxy-3-oxobutyl phosphate + 5-amino-6-(D-ribitylamino)uracil = 6,7-dimethyl-8-(1-D-ribityl)lumazine + phosphate + 2 H2O + H(+). Its pathway is cofactor biosynthesis; riboflavin biosynthesis; riboflavin from 2-hydroxy-3-oxobutyl phosphate and 5-amino-6-(D-ribitylamino)uracil: step 1/2. Its function is as follows. Catalyzes the formation of 6,7-dimethyl-8-ribityllumazine by condensation of 5-amino-6-(D-ribitylamino)uracil with 3,4-dihydroxy-2-butanone 4-phosphate. This is the penultimate step in the biosynthesis of riboflavin. This is 6,7-dimethyl-8-ribityllumazine synthase from Laribacter hongkongensis (strain HLHK9).